The following is a 358-amino-acid chain: MRKINFSAGPSTLPLEILEQAQKELCDYQGRGYSIMEISHRTKVFEEVHFGAQEKAKKLYGLNDDYEVLFLQGGASLQFAMIPMNLALNGVCEYANTGVWTKKAIKEAQILGVNVKTVASSEESNFNHIPRVEFRDNADYAYICSNNTIYGTQYQNYPKTKTPLIVDASSDFFSRKVDFSNIALFYGGVQKNAGISGLSCIFIRKDMLERSKNKQIPSMLNYLTHAENQSLFNTPPTFAIYMFNLEMDWLLNQGGLDKVHEKNSQKAAMLYECIDLSNGFYKGHADKKDRSLMNVSFNIAKNKDLEPLFVKEAEEAGMIGLKGHRILGGIRASIYNALNLDQIKTLCEFMKEFQGKYA.

Arginine 41 serves as a coordination point for L-glutamate. Pyridoxal 5'-phosphate-binding positions include 75–76, tryptophan 100, threonine 148, aspartate 167, and glutamine 190; that span reads AS. N6-(pyridoxal phosphate)lysine is present on lysine 191. A pyridoxal 5'-phosphate-binding site is contributed by 233–234; the sequence is NT.

This sequence belongs to the class-V pyridoxal-phosphate-dependent aminotransferase family. SerC subfamily. As to quaternary structure, homodimer. It depends on pyridoxal 5'-phosphate as a cofactor.

The protein resides in the cytoplasm. The enzyme catalyses O-phospho-L-serine + 2-oxoglutarate = 3-phosphooxypyruvate + L-glutamate. It carries out the reaction 4-(phosphooxy)-L-threonine + 2-oxoglutarate = (R)-3-hydroxy-2-oxo-4-phosphooxybutanoate + L-glutamate. The protein operates within amino-acid biosynthesis; L-serine biosynthesis; L-serine from 3-phospho-D-glycerate: step 2/3. It functions in the pathway cofactor biosynthesis; pyridoxine 5'-phosphate biosynthesis; pyridoxine 5'-phosphate from D-erythrose 4-phosphate: step 3/5. Functionally, catalyzes the reversible conversion of 3-phosphohydroxypyruvate to phosphoserine and of 3-hydroxy-2-oxo-4-phosphonooxybutanoate to phosphohydroxythreonine. The sequence is that of Phosphoserine aminotransferase from Campylobacter jejuni subsp. jejuni serotype O:23/36 (strain 81-176).